The sequence spans 485 residues: MTHWIAGEWVQGQGEEFVSLSPYNQEVIWRGNGATAEQVDQAVAAARAAFVEWKKRPFAEREAIVLAFAEKVKENSEKIAEVIAKETGKPIWETRTEAAAMAGKIAISIRAYHDRTGEATREAAGNQIVLRHRPLGVMAVFGPYNFPGHLPNGHIVPALLAGNTVVFKPSEQTPWTGELAMKLWEEAGLPKGVINLVQGAKETGIALADAKGIDGILFTGSANTGHILHRQFAGQPGKMLALEMGGNNPMVISDNYGDLDATVYTIIQSAFISAGQRCTCARRLYVPFGEKGDALITKLVEATKNIRMDQPFAEPAPFMGPQISVAAAKFILDAQANLQSLGGESLIEAKAGEAAFVSPGIIDVTNIAELPDEEYFGPLLQVVRYEGLDKAVELANDTRFGLSAGLVSTDDQEWEYFVDHIRAGIVNRNRQLTGASGDAPFGGPGASGNLRPSAYYAADYCAYPMASMEGQETELPATLSPGVTL.

220–225 is an NAD(+) binding site; that stretch reads GSANTG. Residues Glu-243 and Cys-278 contribute to the active site.

The protein belongs to the aldehyde dehydrogenase family. AstD subfamily.

The enzyme catalyses N-succinyl-L-glutamate 5-semialdehyde + NAD(+) + H2O = N-succinyl-L-glutamate + NADH + 2 H(+). It functions in the pathway amino-acid degradation; L-arginine degradation via AST pathway; L-glutamate and succinate from L-arginine: step 4/5. In terms of biological role, catalyzes the NAD-dependent reduction of succinylglutamate semialdehyde into succinylglutamate. This is N-succinylglutamate 5-semialdehyde dehydrogenase from Vibrio parahaemolyticus serotype O3:K6 (strain RIMD 2210633).